Here is a 371-residue protein sequence, read N- to C-terminus: MSNPLRLAFRPFALLYEAIVQTRNQLFNRAVLRAWESPMPVVSVGNLSAGGTGKTPMVDWVVKYYLSIGFKPAIISRGYKRQSKGVQLVSDGNNVLLSSREAGDETAMLAWNNPDAIVVVASKRKQGVKLITKRFAQRLPSVIILDDAFQHRQIARSLDIVLVNAEEPFVEAAMLPEGRLREPKKNLLRADVVVLNKITDLEAATPSIKALEEMGRPLVKARLSTGELICFSGDATTLDEPATAHHLNAFAFAGIAKPESFVTSLQHEGVNVGATRFVRDHAPYSAKMLRAIRRQAEEQGLCLITTEKDYFRLLGQPELLSIITALPCYYLKIAPDIFDGKALLQEKLNAVVHYVPKPEPPKKIEEPYRRW.

48 to 55 provides a ligand contact to ATP; that stretch reads SAGGTGKT.

It belongs to the LpxK family.

It carries out the reaction a lipid A disaccharide + ATP = a lipid IVA + ADP + H(+). Its pathway is glycolipid biosynthesis; lipid IV(A) biosynthesis; lipid IV(A) from (3R)-3-hydroxytetradecanoyl-[acyl-carrier-protein] and UDP-N-acetyl-alpha-D-glucosamine: step 6/6. In terms of biological role, transfers the gamma-phosphate of ATP to the 4'-position of a tetraacyldisaccharide 1-phosphate intermediate (termed DS-1-P) to form tetraacyldisaccharide 1,4'-bis-phosphate (lipid IVA). The protein is Tetraacyldisaccharide 4'-kinase of Chlorobium chlorochromatii (strain CaD3).